We begin with the raw amino-acid sequence, 318 residues long: Pantothenate synthetase (318 aa).

44 to 51 contributes to the ATP binding site; the sequence is MGALHQGH. Residue His-51 is the Proton donor of the active site. Gln-75 serves as a coordination point for (R)-pantoate. Gln-75 contacts beta-alanine. 161–164 serves as a coordination point for ATP; the sequence is GEKD. Gln-167 contributes to the (R)-pantoate binding site. ATP-binding positions include Val-190 and 198-201; that span reads LSSR. The interval 295 to 318 is disordered; sequence DGHPNLDSQPEPAGTDPALLPPAR.

The protein belongs to the pantothenate synthetase family. In terms of assembly, homodimer.

Its subcellular location is the cytoplasm. It catalyses the reaction (R)-pantoate + beta-alanine + ATP = (R)-pantothenate + AMP + diphosphate + H(+). It participates in cofactor biosynthesis; (R)-pantothenate biosynthesis; (R)-pantothenate from (R)-pantoate and beta-alanine: step 1/1. In terms of biological role, catalyzes the condensation of pantoate with beta-alanine in an ATP-dependent reaction via a pantoyl-adenylate intermediate. The polypeptide is Pantothenate synthetase (Nocardia farcinica (strain IFM 10152)).